A 338-amino-acid chain; its full sequence is Holliday junction branch migration complex subunit RuvB (338 aa).

The segment at 1–180 is large ATPase domain (RuvB-L); sequence MERLLDNKFS…FGIIERLDYY (180 aa). Residues Leu19, Arg20, Gly61, Lys64, Thr65, Thr66, Arg170, Tyr180, and Arg217 each contribute to the ATP site. Position 65 (Thr65) interacts with Mg(2+). The interval 181–251 is small ATPAse domain (RuvB-S); it reads TVEELSQIVM…VAKSGLEMFE (71 aa). Residues 254–338 form a head domain (RuvB-H) region; the sequence is EYGLDLVDRN…FNVKESGDKR (85 aa). DNA contacts are provided by Lys309 and Arg314.

The protein belongs to the RuvB family. Homohexamer. Forms an RuvA(8)-RuvB(12)-Holliday junction (HJ) complex. HJ DNA is sandwiched between 2 RuvA tetramers; dsDNA enters through RuvA and exits via RuvB. An RuvB hexamer assembles on each DNA strand where it exits the tetramer. Each RuvB hexamer is contacted by two RuvA subunits (via domain III) on 2 adjacent RuvB subunits; this complex drives branch migration. In the full resolvosome a probable DNA-RuvA(4)-RuvB(12)-RuvC(2) complex forms which resolves the HJ.

Its subcellular location is the cytoplasm. It carries out the reaction ATP + H2O = ADP + phosphate + H(+). Its function is as follows. The RuvA-RuvB-RuvC complex processes Holliday junction (HJ) DNA during genetic recombination and DNA repair, while the RuvA-RuvB complex plays an important role in the rescue of blocked DNA replication forks via replication fork reversal (RFR). RuvA specifically binds to HJ cruciform DNA, conferring on it an open structure. The RuvB hexamer acts as an ATP-dependent pump, pulling dsDNA into and through the RuvAB complex. RuvB forms 2 homohexamers on either side of HJ DNA bound by 1 or 2 RuvA tetramers; 4 subunits per hexamer contact DNA at a time. Coordinated motions by a converter formed by DNA-disengaged RuvB subunits stimulates ATP hydrolysis and nucleotide exchange. Immobilization of the converter enables RuvB to convert the ATP-contained energy into a lever motion, pulling 2 nucleotides of DNA out of the RuvA tetramer per ATP hydrolyzed, thus driving DNA branch migration. The RuvB motors rotate together with the DNA substrate, which together with the progressing nucleotide cycle form the mechanistic basis for DNA recombination by continuous HJ branch migration. Branch migration allows RuvC to scan DNA until it finds its consensus sequence, where it cleaves and resolves cruciform DNA. The chain is Holliday junction branch migration complex subunit RuvB from Caldicellulosiruptor saccharolyticus (strain ATCC 43494 / DSM 8903 / Tp8T 6331).